The chain runs to 372 residues: Rab9 effector protein with kelch motifs (372 aa).

Kelch repeat units follow at residues 49–95 (KVFI…FIPS), 100–146 (SIWV…TSSA), 151–203 (QLYV…AAGT), 204–250 (KLFI…SAVA), and 254–303 (HLYV…IIPW). Residues 309–341 (SEKEDSNSATVNRDAEKGDSTEKGVTQGGDSQE) form a disordered region. A compositionally biased stretch (basic and acidic residues) spans 321-330 (RDAEKGDSTE). One copy of the Kelch 6 repeat lies at 349 to 372 (LCFVFGGMNTEGEIYDDCIVTAVD).

Interacts with PIKFYVE; the interaction recruits RABEPK to the endosomal membrane. Interacts with RAB9 in its GTP-bound conformation. Post-translationally, phosphorylated on Ser residues by PIKFYVE.

It localises to the cytoplasm. It is found in the endosome membrane. Rab9 effector required for endosome to trans-Golgi network (TGN) transport. This Bos taurus (Bovine) protein is Rab9 effector protein with kelch motifs (RABEPK).